A 199-amino-acid polypeptide reads, in one-letter code: Photosystem I reaction center subunit XI (199 aa).

A run of 2 helical transmembrane segments spans residues 108–128 and 165–185; these read ITAG…LLVL and FWLG…TLHL.

The protein belongs to the PsaL family.

Its subcellular location is the cellular thylakoid membrane. In Prochlorococcus marinus (strain MIT 9515), this protein is Photosystem I reaction center subunit XI.